A 500-amino-acid chain; its full sequence is Bifunctional protein GlmU (500 aa).

The tract at residues 1–242 is pyrophosphorylase; it reads MPVQTAVVVL…SAKVAGANDR (242 aa). UDP-N-acetyl-alpha-D-glucosamine is bound by residues 10-13, Lys-24, Gln-81, and 86-87; these read LAAG and GT. Residue Asp-112 participates in Mg(2+) binding. UDP-N-acetyl-alpha-D-glucosamine-binding residues include Gly-151, Glu-167, Asn-182, and Asn-240. Mg(2+) is bound at residue Asn-240. The interval 243 to 263 is linker; that stretch reads VQLSRLAAELNRRTVENWMRA. The segment at 264–500 is N-acetyltransferase; it reads GVTVVDPSTT…KQDLKDGIEQ (237 aa). Residues Arg-345 and Lys-363 each coordinate UDP-N-acetyl-alpha-D-glucosamine. His-375 serves as the catalytic Proton acceptor. Residues Tyr-378 and Asn-389 each coordinate UDP-N-acetyl-alpha-D-glucosamine. Residues Ala-392, 398–399, Ser-417, and Ala-435 contribute to the acetyl-CoA site; that span reads NY. The disordered stretch occupies residues 472 to 500; that stretch reads AEAAAAAGLHHSSDLHETEKQDLKDGIEQ. Residues 482–500 are compositionally biased toward basic and acidic residues; that stretch reads HSSDLHETEKQDLKDGIEQ.

The protein in the N-terminal section; belongs to the N-acetylglucosamine-1-phosphate uridyltransferase family. This sequence in the C-terminal section; belongs to the transferase hexapeptide repeat family. As to quaternary structure, homotrimer. Mg(2+) serves as cofactor.

It is found in the cytoplasm. It catalyses the reaction alpha-D-glucosamine 1-phosphate + acetyl-CoA = N-acetyl-alpha-D-glucosamine 1-phosphate + CoA + H(+). The catalysed reaction is N-acetyl-alpha-D-glucosamine 1-phosphate + UTP + H(+) = UDP-N-acetyl-alpha-D-glucosamine + diphosphate. It functions in the pathway nucleotide-sugar biosynthesis; UDP-N-acetyl-alpha-D-glucosamine biosynthesis; N-acetyl-alpha-D-glucosamine 1-phosphate from alpha-D-glucosamine 6-phosphate (route II): step 2/2. The protein operates within nucleotide-sugar biosynthesis; UDP-N-acetyl-alpha-D-glucosamine biosynthesis; UDP-N-acetyl-alpha-D-glucosamine from N-acetyl-alpha-D-glucosamine 1-phosphate: step 1/1. It participates in bacterial outer membrane biogenesis; LPS lipid A biosynthesis. Functionally, catalyzes the last two sequential reactions in the de novo biosynthetic pathway for UDP-N-acetylglucosamine (UDP-GlcNAc). The C-terminal domain catalyzes the transfer of acetyl group from acetyl coenzyme A to glucosamine-1-phosphate (GlcN-1-P) to produce N-acetylglucosamine-1-phosphate (GlcNAc-1-P), which is converted into UDP-GlcNAc by the transfer of uridine 5-monophosphate (from uridine 5-triphosphate), a reaction catalyzed by the N-terminal domain. The protein is Bifunctional protein GlmU of Rhodococcus jostii (strain RHA1).